A 139-amino-acid polypeptide reads, in one-letter code: Translation initiation factor 5A (139 aa).

K36 is modified (hypusine).

Belongs to the eIF-5A family.

The protein localises to the cytoplasm. Functions by promoting the formation of the first peptide bond. This Aeropyrum pernix (strain ATCC 700893 / DSM 11879 / JCM 9820 / NBRC 100138 / K1) protein is Translation initiation factor 5A (eif5a).